Here is a 778-residue protein sequence, read N- to C-terminus: Phenylalanine--tRNA ligase beta subunit (778 aa).

One can recognise a tRNA-binding domain in the interval 39–150 (YEVPQKIVFG…GKYKIGEEVS (112 aa)). A B5 domain is found at 391-467 (HEDKIISLNK…RLVGIDNIPS (77 aa)). Residues Asp445, Asp451, Glu454, and Glu455 each coordinate Mg(2+). Positions 686-778 (SKYQASFRDL…LKNQLGVGIR (93 aa)) constitute an FDX-ACB domain.

Belongs to the phenylalanyl-tRNA synthetase beta subunit family. Type 1 subfamily. Tetramer of two alpha and two beta subunits. Requires Mg(2+) as cofactor.

The protein localises to the cytoplasm. It catalyses the reaction tRNA(Phe) + L-phenylalanine + ATP = L-phenylalanyl-tRNA(Phe) + AMP + diphosphate + H(+). The sequence is that of Phenylalanine--tRNA ligase beta subunit from Sulfurimonas denitrificans (strain ATCC 33889 / DSM 1251) (Thiomicrospira denitrificans (strain ATCC 33889 / DSM 1251)).